Here is a 530-residue protein sequence, read N- to C-terminus: 4-alpha-glucanotransferase (530 aa).

Belongs to the disproportionating enzyme family.

The protein resides in the cytoplasm. It catalyses the reaction Transfers a segment of a (1-&gt;4)-alpha-D-glucan to a new position in an acceptor, which may be glucose or a (1-&gt;4)-alpha-D-glucan.. This Chlamydia caviae (strain ATCC VR-813 / DSM 19441 / 03DC25 / GPIC) (Chlamydophila caviae) protein is 4-alpha-glucanotransferase (malQ).